Consider the following 284-residue polypeptide: Polyamine aminopropyltransferase (284 aa).

Residues 2–237 (ELWYTEQHTE…GHWLFGFASK (236 aa)) form the PABS domain. S-methyl-5'-thioadenosine is bound at residue Q31. Residues H62 and D86 each coordinate spermidine. S-methyl-5'-thioadenosine-binding positions include E106 and 137 to 138 (DG). D155 functions as the Proton acceptor in the catalytic mechanism. 155 to 158 (DSTD) lines the spermidine pocket. An S-methyl-5'-thioadenosine-binding site is contributed by P162.

It belongs to the spermidine/spermine synthase family. In terms of assembly, homodimer or homotetramer.

It localises to the cytoplasm. The catalysed reaction is S-adenosyl 3-(methylsulfanyl)propylamine + putrescine = S-methyl-5'-thioadenosine + spermidine + H(+). It participates in amine and polyamine biosynthesis; spermidine biosynthesis; spermidine from putrescine: step 1/1. In terms of biological role, catalyzes the irreversible transfer of a propylamine group from the amino donor S-adenosylmethioninamine (decarboxy-AdoMet) to putrescine (1,4-diaminobutane) to yield spermidine. This chain is Polyamine aminopropyltransferase, found in Clostridium beijerinckii (strain ATCC 51743 / NCIMB 8052) (Clostridium acetobutylicum).